Here is an 84-residue protein sequence, read N- to C-terminus: Putative membrane protein insertion efficiency factor (84 aa).

The segment at 60 to 84 (WSQPGEDPVPDHFSLKRNDTRKQSH) is disordered. Basic and acidic residues predominate over residues 68–84 (VPDHFSLKRNDTRKQSH).

This sequence belongs to the UPF0161 family.

The protein localises to the cell membrane. Its function is as follows. Could be involved in insertion of integral membrane proteins into the membrane. This Streptococcus gordonii (strain Challis / ATCC 35105 / BCRC 15272 / CH1 / DL1 / V288) protein is Putative membrane protein insertion efficiency factor.